The sequence spans 314 residues: Protein OPG185 (314 aa).

The first 16 residues, 1 to 16 (MARLPILLLLISLVYS), serve as a signal peptide directing secretion. One can recognise an Ig-like V-type domain in the interval 17–121 (TPSPQTSKKI…NDTDKVDYEE (105 aa)). At 17 to 278 (TPSPQTSKKI…SNYKTKDFVE (262 aa)) the chain is on the virion surface side. Cys34 and Cys103 are oxidised to a cystine. 5 N-linked (GlcNAc...) asparagine; by host glycosylation sites follow: Asn37, Asn38, Asn69, Asn112, and Asn161. Positions 192 to 217 (NTVSTTSRESTTDETPEPITDKEEDH) are disordered. An N-linked (GlcNAc...) asparagine; by host glycan is attached at Asn253. Residues 279–302 (IFGITALIILSAVAIFCITYYICN) traverse the membrane as a helical segment. The Intravirion portion of the chain corresponds to 303-314 (KRSRKYKTENKV).

The protein belongs to the orthopoxvirus OPG185 family. As to quaternary structure, heterodimerizes with OPG040. The heterodimer OPG185-OPG040 interacts with components of the entry fusion complex OPG143 and OPG094. Heterodimer with C3/VPC protein; disulfide-linked. Post-translationally, glycosylated; contains phosphate and sulfate-substituted glycans. O-glycosylation is required for hemagglutination and hemadsorption activities of infected cell membranes.

It is found in the virion membrane. It localises to the host membrane. Prevents cell to cell fusion by interacting with and directing the viral OPG040 protein on the host plasma membrane. The OPG185-OPG040 complex associates with components of the entry fusion complex (EFC) presumably to avoid superinfection and syncytium formation. Via its interaction with C3/VCP protein, protects the infected cell and probably also the extracellular enveloped virus from complement attack. The sequence is that of Protein OPG185 (OPG185) from Bos taurus (Bovine).